Reading from the N-terminus, the 232-residue chain is Phosphatidylserine decarboxylase proenzyme (232 aa).

The Schiff-base intermediate with substrate; via pyruvic acid role is filled by S190. A Pyruvic acid (Ser); by autocatalysis modification is found at S190.

The protein belongs to the phosphatidylserine decarboxylase family. PSD-A subfamily. In terms of assembly, heterodimer of a large membrane-associated beta subunit and a small pyruvoyl-containing alpha subunit. Pyruvate serves as cofactor. Post-translationally, is synthesized initially as an inactive proenzyme. Formation of the active enzyme involves a self-maturation process in which the active site pyruvoyl group is generated from an internal serine residue via an autocatalytic post-translational modification. Two non-identical subunits are generated from the proenzyme in this reaction, and the pyruvate is formed at the N-terminus of the alpha chain, which is derived from the carboxyl end of the proenzyme. The post-translation cleavage follows an unusual pathway, termed non-hydrolytic serinolysis, in which the side chain hydroxyl group of the serine supplies its oxygen atom to form the C-terminus of the beta chain, while the remainder of the serine residue undergoes an oxidative deamination to produce ammonia and the pyruvoyl prosthetic group on the alpha chain.

Its subcellular location is the cell membrane. It carries out the reaction a 1,2-diacyl-sn-glycero-3-phospho-L-serine + H(+) = a 1,2-diacyl-sn-glycero-3-phosphoethanolamine + CO2. It functions in the pathway phospholipid metabolism; phosphatidylethanolamine biosynthesis; phosphatidylethanolamine from CDP-diacylglycerol: step 2/2. Catalyzes the formation of phosphatidylethanolamine (PtdEtn) from phosphatidylserine (PtdSer). The protein is Phosphatidylserine decarboxylase proenzyme of Mesorhizobium japonicum (strain LMG 29417 / CECT 9101 / MAFF 303099) (Mesorhizobium loti (strain MAFF 303099)).